The chain runs to 336 residues: Ketol-acid reductoisomerase (NADP(+)) (336 aa).

The region spanning 1–181 is the KARI N-terminal Rossmann domain; sequence MNVYYDKDCN…GGGRTGIIET (181 aa). Residues 24–27, Arg47, Ser50, Ser52, and 82–85 contribute to the NADP(+) site; these read YGSQ and DEFQ. The active site involves His107. Residue Gly133 coordinates NADP(+). The KARI C-terminal knotted domain occupies 182 to 327; sequence TFQDETETDL…GKLRSMMPWI (146 aa). Mg(2+) is bound by residues Asp190, Glu194, Glu226, and Glu230. Ser251 contributes to the substrate binding site.

It belongs to the ketol-acid reductoisomerase family. Mg(2+) serves as cofactor.

The catalysed reaction is (2R)-2,3-dihydroxy-3-methylbutanoate + NADP(+) = (2S)-2-acetolactate + NADPH + H(+). It carries out the reaction (2R,3R)-2,3-dihydroxy-3-methylpentanoate + NADP(+) = (S)-2-ethyl-2-hydroxy-3-oxobutanoate + NADPH + H(+). It participates in amino-acid biosynthesis; L-isoleucine biosynthesis; L-isoleucine from 2-oxobutanoate: step 2/4. The protein operates within amino-acid biosynthesis; L-valine biosynthesis; L-valine from pyruvate: step 2/4. In terms of biological role, involved in the biosynthesis of branched-chain amino acids (BCAA). Catalyzes an alkyl-migration followed by a ketol-acid reduction of (S)-2-acetolactate (S2AL) to yield (R)-2,3-dihydroxy-isovalerate. In the isomerase reaction, S2AL is rearranged via a Mg-dependent methyl migration to produce 3-hydroxy-3-methyl-2-ketobutyrate (HMKB). In the reductase reaction, this 2-ketoacid undergoes a metal-dependent reduction by NADPH to yield (R)-2,3-dihydroxy-isovalerate. The chain is Ketol-acid reductoisomerase (NADP(+)) from Geotalea daltonii (strain DSM 22248 / JCM 15807 / FRC-32) (Geobacter daltonii).